The chain runs to 333 residues: Syntaxin-4 (333 aa).

The Cytoplasmic segment spans residues 1 to 312; sequence MGKDRLPELL…QHQKKARKKK (312 aa). Residues 50 to 66 are compositionally biased toward low complexity; the sequence is YSVVSQNSHSCSNNNSS. The segment at 50-81 is disordered; that stretch reads YSVVSQNSHSCSNNNSSTEPKDRSSSKMTQYG. The stretch at 91-116 forms a coiled coil; that stretch reads YTEIRQQLAQIAANLETMNRMAQTVN. In terms of domain architecture, t-SNARE coiled-coil homology spans 239–301; sequence LREMMDRFNE…DKGADELDQA (63 aa). A helical; Anchor for type IV membrane protein membrane pass occupies residues 313-333; the sequence is IMLIVILAAVLLVLLLVGIYL.

Belongs to the syntaxin family.

The protein resides in the membrane. Its function is as follows. Potentially involved in docking of synaptic vesicles at presynaptic active zones. The chain is Syntaxin-4 from Drosophila melanogaster (Fruit fly).